Consider the following 362-residue polypeptide: Probable dual-specificity RNA methyltransferase RlmN (362 aa).

The Proton acceptor role is filled by Glu-105. The region spanning 111-344 is the Radical SAM core domain; it reads HEYGNSICVT…VTIRREQGHD (234 aa). The cysteines at positions 118 and 349 are disulfide-linked. Positions 125, 129, and 132 each coordinate [4Fe-4S] cluster. Residues 175 to 176, Ser-207, 230 to 232, and Asn-306 each bind S-adenosyl-L-methionine; these read GE and SLH. Residue Cys-349 is the S-methylcysteine intermediate of the active site.

This sequence belongs to the radical SAM superfamily. RlmN family. [4Fe-4S] cluster is required as a cofactor.

It localises to the cytoplasm. The catalysed reaction is adenosine(2503) in 23S rRNA + 2 reduced [2Fe-2S]-[ferredoxin] + 2 S-adenosyl-L-methionine = 2-methyladenosine(2503) in 23S rRNA + 5'-deoxyadenosine + L-methionine + 2 oxidized [2Fe-2S]-[ferredoxin] + S-adenosyl-L-homocysteine. The enzyme catalyses adenosine(37) in tRNA + 2 reduced [2Fe-2S]-[ferredoxin] + 2 S-adenosyl-L-methionine = 2-methyladenosine(37) in tRNA + 5'-deoxyadenosine + L-methionine + 2 oxidized [2Fe-2S]-[ferredoxin] + S-adenosyl-L-homocysteine. Functionally, specifically methylates position 2 of adenine 2503 in 23S rRNA and position 2 of adenine 37 in tRNAs. The chain is Probable dual-specificity RNA methyltransferase RlmN from Bacillus cereus (strain ATCC 14579 / DSM 31 / CCUG 7414 / JCM 2152 / NBRC 15305 / NCIMB 9373 / NCTC 2599 / NRRL B-3711).